The sequence spans 401 residues: Methionyl-tRNA formyltransferase, mitochondrial (401 aa).

Residues 1-26 (MVKMRRITPTRLLFTCRYISNNASPP) constitute a mitochondrion transit peptide. (6R)-10-formyltetrahydrofolate-binding positions include 18-20 (YIS) and 66-70 (VVTRS).

The protein belongs to the Fmt family. Phosphorylated by GCN2 in response to nutrient deprivation. Phosphorylation mediates retention of FMT1 in the cytoplasm.

The protein localises to the mitochondrion. Its subcellular location is the mitochondrion matrix. The protein resides in the cytoplasm. It catalyses the reaction L-methionyl-tRNA(fMet) + (6R)-10-formyltetrahydrofolate = N-formyl-L-methionyl-tRNA(fMet) + (6S)-5,6,7,8-tetrahydrofolate + H(+). Functionally, formylates methionyl-tRNA in mitochondria and the cytoplasm. Responsible for the formylation of the 8 N-terminally formylated (Nt-formylated) mitochondrial matrix proteins that are encoded by mitochondrial DNA. Nt-formylated proteins in the cytoplasm are strongly up-regulated in stationary phase or upon starvation for specific amino acids (His or Lys) and are targeted for degradation by a PSH1 E3 ubiquitin ligase-mediated fMet/N-end rule pathway. Increased Nt-formylation of cytosolic proteins appears to be important for adaptation to these stresses. Stationary phase-degraded Nt-formylated proteins include histone H3-like centromeric protein CSE4, Mediator complex subunit 3 (PGD1) and small ribosomal subunit protein uS8-A (RPS22A). The protein is Methionyl-tRNA formyltransferase, mitochondrial (FMT1) of Saccharomyces cerevisiae (strain ATCC 204508 / S288c) (Baker's yeast).